A 155-amino-acid chain; its full sequence is Small ribosomal subunit protein uS7cz/uS7cy (155 aa).

This sequence belongs to the universal ribosomal protein uS7 family. As to quaternary structure, part of the 30S ribosomal subunit.

It is found in the plastid. The protein resides in the chloroplast. In terms of biological role, one of the primary rRNA binding proteins, it binds directly to 16S rRNA where it nucleates assembly of the head domain of the 30S subunit. The chain is Small ribosomal subunit protein uS7cz/uS7cy (rps7-A) from Coffea arabica (Arabian coffee).